A 169-amino-acid polypeptide reads, in one-letter code: Myosin regulatory light chain 11 (169 aa).

Ala-2 is modified (n,N,N-trimethylalanine). Residues Ser-15 and Ser-16 each carry the phosphoserine modification. A phosphothreonine mark is found at Thr-25 and Thr-35. Positions 25 to 60 (TQIQEFKEAFTVIDQNRDGIIDKEDLRDTFAAMGRL) constitute an EF-hand 1 domain. Residues Asp-38, Asn-40, Asp-42, and Asp-49 each contribute to the Ca(2+) site. Position 75 is a phosphoserine (Ser-75). 2 EF-hand domains span residues 95–130 (DPED…QCDR) and 131–166 (FSQE…GDAK). A Phosphothreonine modification is found at Thr-101.

In terms of assembly, myosin is a hexamer of 2 heavy chains and 4 light chains. As to expression, expressed in fetal and adult skeletal muscle.

Myosin regulatory subunit that plays an essential role to maintain muscle integrity during early development. Plays a role in muscle contraction. This Homo sapiens (Human) protein is Myosin regulatory light chain 11.